The primary structure comprises 660 residues: DNA ligase (660 aa).

Residues 33 to 37 (DFVYD), 82 to 83 (SL), and glutamate 110 contribute to the NAD(+) site. The active-site N6-AMP-lysine intermediate is lysine 112. 4 residues coordinate NAD(+): arginine 133, glutamate 167, lysine 281, and lysine 305. The Zn(2+) site is built by cysteine 396, cysteine 399, cysteine 412, and cysteine 417. Positions 583–660 (DENKLLVGKK…SFEDIKSYLD (78 aa)) constitute a BRCT domain.

The protein belongs to the NAD-dependent DNA ligase family. LigA subfamily. Requires Mg(2+) as cofactor. It depends on Mn(2+) as a cofactor.

It carries out the reaction NAD(+) + (deoxyribonucleotide)n-3'-hydroxyl + 5'-phospho-(deoxyribonucleotide)m = (deoxyribonucleotide)n+m + AMP + beta-nicotinamide D-nucleotide.. Its function is as follows. DNA ligase that catalyzes the formation of phosphodiester linkages between 5'-phosphoryl and 3'-hydroxyl groups in double-stranded DNA using NAD as a coenzyme and as the energy source for the reaction. It is essential for DNA replication and repair of damaged DNA. In Borreliella afzelii (strain PKo) (Borrelia afzelii), this protein is DNA ligase.